The chain runs to 147 residues: Large ribosomal subunit protein uL13 (147 aa).

Belongs to the universal ribosomal protein uL13 family. In terms of assembly, part of the 50S ribosomal subunit.

Functionally, this protein is one of the early assembly proteins of the 50S ribosomal subunit, although it is not seen to bind rRNA by itself. It is important during the early stages of 50S assembly. This is Large ribosomal subunit protein uL13 from Corynebacterium diphtheriae (strain ATCC 700971 / NCTC 13129 / Biotype gravis).